Reading from the N-terminus, the 295-residue chain is Bifunctional protein FolD (295 aa).

Residues 166–168 (GRS), Thr-195, and Val-236 each bind NADP(+).

Belongs to the tetrahydrofolate dehydrogenase/cyclohydrolase family. In terms of assembly, homodimer.

The catalysed reaction is (6R)-5,10-methylene-5,6,7,8-tetrahydrofolate + NADP(+) = (6R)-5,10-methenyltetrahydrofolate + NADPH. It carries out the reaction (6R)-5,10-methenyltetrahydrofolate + H2O = (6R)-10-formyltetrahydrofolate + H(+). It participates in one-carbon metabolism; tetrahydrofolate interconversion. In terms of biological role, catalyzes the oxidation of 5,10-methylenetetrahydrofolate to 5,10-methenyltetrahydrofolate and then the hydrolysis of 5,10-methenyltetrahydrofolate to 10-formyltetrahydrofolate. This Syntrophobacter fumaroxidans (strain DSM 10017 / MPOB) protein is Bifunctional protein FolD.